Consider the following 100-residue polypeptide: UPF0213 protein YhbQ (100 aa).

In terms of domain architecture, GIY-YIG spans 2–77 (TPWFLYLIRT…KQLTKRQKER (76 aa)).

Belongs to the UPF0213 family.

The protein is UPF0213 protein YhbQ of Shigella dysenteriae serotype 1 (strain Sd197).